The chain runs to 358 residues: 4-hydroxybenzoate polyprenyltransferase, mitochondrial (358 aa).

The transit peptide at 1-20 (MIIKPIASPARYFLRTPSWS) directs the protein to the mitochondrion. A run of 7 helical transmembrane segments spans residues 76 to 96 (TGTY…AYAY), 107 to 127 (LALF…INDL), 154 to 174 (AISL…QLNP), 202 to 222 (VVLG…LAGE), 229 to 249 (VVAP…TIYA), 275 to 295 (VLCG…IMNG), and 336 to 356 (NTGY…SFIY).

The protein belongs to the UbiA prenyltransferase family. Mg(2+) is required as a cofactor.

The protein localises to the mitochondrion. It is found in the mitochondrion inner membrane. The catalysed reaction is an all-trans-polyprenyl diphosphate + 4-hydroxybenzoate = a 4-hydroxy-3-(all-trans-polyprenyl)benzoate + diphosphate. The protein operates within cofactor biosynthesis; ubiquinone biosynthesis. Its function is as follows. Catalyzes the prenylation of para-hydroxybenzoate (PHB) with an all-trans polyprenyl group. Mediates the second step in the final reaction sequence of coenzyme Q (CoQ) biosynthesis, which is the condensation of the polyisoprenoid side chain with PHB, generating the first membrane-bound Q intermediate. The polypeptide is 4-hydroxybenzoate polyprenyltransferase, mitochondrial (Schizosaccharomyces pombe (strain 972 / ATCC 24843) (Fission yeast)).